A 227-amino-acid chain; its full sequence is uncharacterized protein (227 aa).

4 helical membrane passes run V17 to S37, G79 to I99, L112 to I132, and V181 to F201.

The protein localises to the cell membrane. This is an uncharacterized protein from Escherichia coli (strain K12).